Consider the following 403-residue polypeptide: GPI-N-acetylgalactosamine transferase PGAP4 (403 aa).

Topologically, residues 1-22 are cytoplasmic; it reads MSTSTSPAAMLLRRLRRLSWGS. The helical transmembrane segment at 23 to 43 threads the bilayer; sequence TAVQLFILTVVTFGLLAPLAC. The Lumenal segment spans residues 44–259; sequence HRLLHSYFYL…RLQHYTNPEP (216 aa). Val109 provides a ligand contact to UDP-N-acetyl-alpha-D-galactosamine. 2 cysteine pairs are disulfide-bonded: Cys132–Cys136 and Cys144–Cys194. The DXD motif signature appears at 211-213; the sequence is EDD. The helical transmembrane segment at 260-280 threads the bilayer; the sequence is MRILEWVGVGMLLGPLLTWIY. Topologically, residues 281-287 are cytoplasmic; sequence MRFASRP. The chain crosses the membrane as a helical span at residues 288-308; sequence GFSWPVMLFFSLYSMGLVELV. The Lumenal portion of the chain corresponds to 309-403; that stretch reads GRHYFLELRR…LRYNFHPSLL (95 aa). A disulfide bond links Cys332 and Cys333. Thr334, Pro335, and Lys362 together coordinate UDP-N-acetyl-alpha-D-galactosamine.

Belongs to the PGAP4 family. In terms of processing, glycosylated.

The protein localises to the golgi apparatus membrane. Golgi-resident glycosylphosphatidylinositol (GPI)-N-acetylgalactosamine transferase that catalyzes the N-acetyl-beta-D-galactosamine transfer from an UDP-N-acetyl-alpha-D-galactosamine to the 4-OH-position of first mannose of the glycosylphosphatidylinositol (GPI) of a GPI-anchored protein (GPI-AP). This modification occurs after the fatty acid remodeling step of the GPI-anchor maturation. The polypeptide is GPI-N-acetylgalactosamine transferase PGAP4 (Pongo abelii (Sumatran orangutan)).